A 392-amino-acid chain; its full sequence is Sulfate adenylyltransferase (392 aa).

This sequence belongs to the sulfate adenylyltransferase family.

The enzyme catalyses sulfate + ATP + H(+) = adenosine 5'-phosphosulfate + diphosphate. It functions in the pathway sulfur metabolism; hydrogen sulfide biosynthesis; sulfite from sulfate: step 1/3. The chain is Sulfate adenylyltransferase from Nostoc punctiforme (strain ATCC 29133 / PCC 73102).